A 724-amino-acid polypeptide reads, in one-letter code: Catalase-peroxidase (724 aa).

A cross-link (tryptophyl-tyrosyl-methioninium (Trp-Tyr) (with M-252)) is located at residues 98-226 (WHAAGSYRTA…LAAVQMGLIY (129 aa)). H99 acts as the Proton acceptor in catalysis. The tryptophyl-tyrosyl-methioninium (Tyr-Met) (with W-98) cross-link spans 226-252 (YVNPQGVNGEPDPLRTALHVRETFARM). Heme b is bound at residue H267.

It belongs to the peroxidase family. Peroxidase/catalase subfamily. Homodimer or homotetramer. The cofactor is heme b. Post-translationally, formation of the three residue Trp-Tyr-Met cross-link is important for the catalase, but not the peroxidase activity of the enzyme.

It carries out the reaction H2O2 + AH2 = A + 2 H2O. The enzyme catalyses 2 H2O2 = O2 + 2 H2O. Bifunctional enzyme with both catalase and broad-spectrum peroxidase activity. The protein is Catalase-peroxidase of Cereibacter sphaeroides (strain ATCC 17025 / ATH 2.4.3) (Rhodobacter sphaeroides).